The sequence spans 434 residues: MESESESGAAADTPPLETLSFHGDEEIIEVVELDPGPPDPDDLAQEMEDVDFEEEEEEEGNEEGWVLEPQEGVVGSMEGPDDSEVTFALHSASVFCVSLDPKTNTLAVTGGEDDKAFVWRLSDGELLFECAGHKDSVTCAGFSHDSTLVATGDMSGLLKVWQVDTKEEVWSFEAGDLEWMEWHPRAPVLLAGTADGNTWMWKVPNGDCKTFQGPNCPATCGRVLPDGKRAVVGYEDGTIRIWDLKQGSPIHVLKGTEGHQGPLTCVATNQDGSLILTGSVDCQAKLVSATTGKVVGVFRPETVASQPSLGEGEESESNSVESLGFCSVMPLAAVGYLDGTLAIYDLATQTLRHQCQHQSGIVQLLWEAGTAVVYTCSLDGIVRLWDARTGRLLTDYRGHTAEILDFALSKDASLVVTTSGDHKAKVFCVQRPDR.

Residues Met-1–Glu-63 form a disordered region. Ser-20 bears the Phosphoserine mark. Over residues Asp-39 to Glu-62 the composition is skewed to acidic residues. WD repeat units lie at residues Leu-89–Glu-129, Gly-132–Ser-171, Glu-173–Gln-212, Pro-214–Lys-254, Gly-258–Arg-299, Ser-315–Gln-354, Gln-356–Asp-395, and Gly-398–Asp-433.

Its subcellular location is the cell membrane. The protein resides in the cytoplasm. Functionally, plays a role in angiogenesis and cell migration. In smooth muscle cell migration, may act through the RhoA pathway. The polypeptide is Angio-associated migratory cell protein (AAMP) (Pongo abelii (Sumatran orangutan)).